Here is a 368-residue protein sequence, read N- to C-terminus: Endophilin-A2 (368 aa).

The membrane-binding amphipathic helix stretch occupies residues 1-21 (MSVAGLKKQFYKASQLVSEKV). The 232-residue stretch at 18 to 249 (SEKVGGAEGT…LKRRVREASS (232 aa)) folds into the BAR domain. Residues 60–87 (PNPASRAKLTMLNTVSKIRGQVKNPGYP) form a required for dimerization upon membrane association region. The stretch at 180-250 (DEELRQALEK…KRRVREASSR (71 aa)) forms a coiled coil. An interaction with ARC region spans residues 218–254 (LVDAQLDYHRQAVQILEELADKLKRRVREASSRPRRE). The tract at residues 243 to 309 (RVREASSRPR…SKSMPPLDQP (67 aa)) is disordered. Over residues 245–261 (REASSRPRREFKPRPQE) the composition is skewed to basic and acidic residues. Residue S288 is modified to Phosphoserine. Residue T298 is modified to Phosphothreonine. The region spanning 306–365 (LDQPSCKALYDFEPENDGELGFREGDLITLTNQIDENWYEGMLHGQSGFFPLSYVQVLVP) is the SH3 domain. Phosphotyrosine is present on Y315.

Belongs to the endophilin family. As to quaternary structure, interacts with ARC, SYNJ1 and DNM1. Interacts with PDCD6IP. Interacts with BIN2. Detected in brain and testis (at protein level). Ubiquitous.

Its subcellular location is the cytoplasm. The protein resides in the early endosome membrane. It is found in the cell projection. The protein localises to the podosome. Its function is as follows. Implicated in endocytosis. May recruit other proteins to membranes with high curvature. The protein is Endophilin-A2 (Sh3gl1) of Rattus norvegicus (Rat).